We begin with the raw amino-acid sequence, 301 residues long: G-protein coupled receptor homolog U51 (301 aa).

Residues 1–15 (MEKETKSLAWPATAE) lie on the Extracellular side of the membrane. The chain crosses the membrane as a helical span at residues 16 to 36 (FYGWVFIFSSIQLCTVVFLTV). Over 37–48 (RFNGFKVGREYA) the chain is Cytoplasmic. A helical transmembrane segment spans residues 49–69 (VFTFAGMSFNCFLLPIKMGLL). Residues 70 to 82 (SGHWTLPRDFCAI) lie on the Extracellular side of the membrane. A helical membrane pass occupies residues 83–103 (LLYIDDFSAYFSSWSLVFMAI). At 104–122 (ERINYFCYSTPLLNENSKA) the chain is on the cytoplasmic side. Residues 123–143 (LAKVCFPIVWVVSGVQALQML) traverse the membrane as a helical segment. Over 144 to 168 (NNYKATALQNETGQCFLAFLRSGHD) the chain is Extracellular. Residue Asn-153 is glycosylated (N-linked (GlcNAc...) asparagine; by host). A helical membrane pass occupies residues 169 to 189 (MWLMLVYSVVIPVMLVFFYLY). Residues 190-199 (SKNFMLLKDE) are Cytoplasmic-facing. Residues 200 to 220 (LSSVTTYLCIYLLLGTIAHLP) form a helical membrane-spanning segment. The Extracellular segment spans residues 221–238 (KAALSEIESDKIFYGLRD). Residues 239 to 259 (IFMALPVLKVYYISAMAYCMA) traverse the membrane as a helical segment. Residues 260-301 (CDDHTVPVRLCSIWLVNLCKKCFSCTRREKGSDLEVGIKMLK) are Cytoplasmic-facing.

Belongs to the G-protein coupled receptor 1 family.

It is found in the host cell membrane. The sequence is that of G-protein coupled receptor homolog U51 (U51) from Homo sapiens (Human).